We begin with the raw amino-acid sequence, 361 residues long: Cilia- and flagella-associated protein 263 (361 aa).

This sequence belongs to the CFAP263 family. In terms of assembly, forms a complex with CFAP184; the interaction is required for functional activity in cilia.

The protein resides in the cell projection. It is found in the cilium. In terms of biological role, in complex with CFAP263, acts as a regulator of ciliary beating that connects radial spoke 3 (RS3) to the inner dynein arm (IDA) and the nexin-dynein regulatory complex (N-DRC). The complex is positioned parallel to N-DRC and forms a connection between the arch at the base of RS3, the IDA tail and N-DRC. In Tetrahymena thermophila (strain SB210), this protein is Cilia- and flagella-associated protein 263 (CFAP263).